Reading from the N-terminus, the 208-residue chain is Small ribosomal subunit protein uS4 (208 aa).

Residues 98-158 (RRLDNIVYRL…EKSRKVASIN (61 aa)) form the S4 RNA-binding domain.

The protein belongs to the universal ribosomal protein uS4 family. Part of the 30S ribosomal subunit. Contacts protein S5. The interaction surface between S4 and S5 is involved in control of translational fidelity.

One of the primary rRNA binding proteins, it binds directly to 16S rRNA where it nucleates assembly of the body of the 30S subunit. Functionally, with S5 and S12 plays an important role in translational accuracy. The sequence is that of Small ribosomal subunit protein uS4 from Geotalea daltonii (strain DSM 22248 / JCM 15807 / FRC-32) (Geobacter daltonii).